Consider the following 189-residue polypeptide: MSEIKMPEFLTVESALKDSGLAVTPAELHGLLVGMISGGLPLDDNAWKPLMYDYTNDGLGWPDSAIQIGSAVFQFTVAELTGSELALSMLIPNDKEGLMNRADGLSEWVNHFISGLGLVDLKMDKASEALKEALVDLEEIARLGIDEDDDIEEQESLFEQVLEHVHVCVLTIHLELGQRIHKDASKAVH.

Belongs to the UPF0149 family.

The protein is UPF0149 protein VSAL_I2539 of Aliivibrio salmonicida (strain LFI1238) (Vibrio salmonicida (strain LFI1238)).